A 126-amino-acid chain; its full sequence is Large ribosomal subunit protein bL12 (126 aa).

This sequence belongs to the bacterial ribosomal protein bL12 family. In terms of assembly, homodimer. Part of the ribosomal stalk of the 50S ribosomal subunit. Forms a multimeric L10(L12)X complex, where L10 forms an elongated spine to which 2 to 4 L12 dimers bind in a sequential fashion. Binds GTP-bound translation factors.

Forms part of the ribosomal stalk which helps the ribosome interact with GTP-bound translation factors. Is thus essential for accurate translation. The chain is Large ribosomal subunit protein bL12 from Desulfatibacillum aliphaticivorans.